A 63-amino-acid chain; its full sequence is Alpha-conotoxin-like PuSG1.2 (63 aa).

The N-terminal stretch at 1-21 (MRCLALLVVTLLLFTATATTG) is a signal peptide. Residues 22-43 (ASNGMNAAASGEAPDSISLAVR) constitute a propeptide that is removed on maturation. 2 cysteine pairs are disulfide-bonded: Cys46–Cys52 and Cys47–Cys60. Residues 48–50 (PDP) are lacks the Ser-Xaa-Pro motif that is crucial for potent interaction with nAChR.

It belongs to the conotoxin A superfamily. In terms of tissue distribution, expressed by the salivary gland.

It localises to the secreted. Functionally, alpha-conopeptides-like may act on postsynaptic membranes, they bind to the nicotinic acetylcholine receptors (nAChR) and thus inhibit them. Has possibly a distinct nAChR binding mode from other alpha-conotoxins, due to a different three residue motif (lacks the Ser-Xaa-Pro motif). The chain is Alpha-conotoxin-like PuSG1.2 from Conus pulicarius (Flea-bitten cone).